The following is a 446-amino-acid chain: Exodeoxyribonuclease 7 large subunit (446 aa).

This sequence belongs to the XseA family. Heterooligomer composed of large and small subunits.

It is found in the cytoplasm. The catalysed reaction is Exonucleolytic cleavage in either 5'- to 3'- or 3'- to 5'-direction to yield nucleoside 5'-phosphates.. In terms of biological role, bidirectionally degrades single-stranded DNA into large acid-insoluble oligonucleotides, which are then degraded further into small acid-soluble oligonucleotides. The sequence is that of Exodeoxyribonuclease 7 large subunit from Streptococcus gordonii (strain Challis / ATCC 35105 / BCRC 15272 / CH1 / DL1 / V288).